The sequence spans 387 residues: DNA double-strand break repair protein Mre11 (387 aa).

Mn(2+) contacts are provided by aspartate 9, histidine 11, aspartate 50, and asparagine 85. Catalysis depends on histidine 86, which acts as the Proton donor. Mn(2+) is bound by residues histidine 150, aspartate 181, and histidine 183. The disordered stretch occupies residues 365-387; that stretch reads AVLDDDADAADDDGRPTTVEEFQ. Over residues 366-375 the composition is skewed to acidic residues; sequence VLDDDADAAD.

This sequence belongs to the MRE11/RAD32 family. Homodimer. Forms a heterotetramer composed of two Mre11 subunits and two Rad50 subunits. Mn(2+) is required as a cofactor.

Its activity is regulated as follows. Nuclease activity is regulated by Rad50. Its function is as follows. Part of the Rad50/Mre11 complex, which is involved in the early steps of DNA double-strand break (DSB) repair. Mre11 binds to DSB ends and has both double-stranded 3'-5' exonuclease activity and single-stranded endonuclease activity. This chain is DNA double-strand break repair protein Mre11, found in Halobacterium salinarum (strain ATCC 700922 / JCM 11081 / NRC-1) (Halobacterium halobium).